A 232-amino-acid polypeptide reads, in one-letter code: Large ribosomal subunit protein uL1 (232 aa).

The protein belongs to the universal ribosomal protein uL1 family. In terms of assembly, part of the 50S ribosomal subunit.

In terms of biological role, binds directly to 23S rRNA. The L1 stalk is quite mobile in the ribosome, and is involved in E site tRNA release. Protein L1 is also a translational repressor protein, it controls the translation of the L11 operon by binding to its mRNA. This Maricaulis maris (strain MCS10) (Caulobacter maris) protein is Large ribosomal subunit protein uL1.